The primary structure comprises 2053 residues: Cell adhesion molecule DSCAML1 (2053 aa).

The N-terminal stretch at 1 to 18 is a signal peptide; the sequence is MWLVTFLLLLDSLHKARP. Ig-like C2-type domains are found at residues 19–119, 115–217, 226–310, 314–396, 408–501, 506–586, 596–685, 690–784, and 788–885; these read EDVG…NIRI, PNIR…ARLS, PTIL…GILT, PLHV…QTAQ, PRIV…ARIN, PSIR…LSIS, PPLI…RQLI, PRFV…MFLT, and PAMI…LTVQ. The Extracellular segment spans residues 19–1591; it reads EDVGTSLYFV…AQGEGDDVKK (1573 aa). 7 cysteine pairs are disulfide-bonded: Cys-47/Cys-103, Cys-146/Cys-198, Cys-247/Cys-294, Cys-336/Cys-386, Cys-429/Cys-485, Cys-526/Cys-575, and Cys-617/Cys-669. Residue Asn-79 is glycosylated (N-linked (GlcNAc...) asparagine). Residues Asn-368 and Asn-471 are each glycosylated (N-linked (GlcNAc...) asparagine). Residues Asn-666 and Asn-710 are each glycosylated (N-linked (GlcNAc...) asparagine). A disulfide bridge links Cys-711 with Cys-767. Residue Asn-809 is glycosylated (N-linked (GlcNAc...) asparagine). Cys-810 and Cys-867 are oxidised to a cystine. 4 consecutive Fibronectin type-III domains span residues 887-984, 989-1088, 1093-1189, and 1193-1288; these read PPDP…TEEA, PPMD…TLED, PPEN…TKED, and PPAG…AGKA. N-linked (GlcNAc...) asparagine glycans are attached at residues Asn-1144 and Asn-1162. In terms of domain architecture, Ig-like C2-type 10 spans 1278–1377; that stretch reads EKVTIEPAGK…TGGFDTIIVN (100 aa). Residues Cys-1311 and Cys-1363 are joined by a disulfide bond. N-linked (GlcNAc...) asparagine glycosylation is present at Asn-1345. 2 consecutive Fibronectin type-III domains span residues 1383 to 1477 and 1478 to 1578; these read PPDQ…THGR and EPSF…TIPP. A glycan (N-linked (GlcNAc...) asparagine) is linked at Asn-1561. A helical transmembrane segment spans residues 1592–1612; that stretch reads LFTIGCPVILATLGVALLFVV. Residues 1613-2053 lie on the Cytoplasmic side of the membrane; sequence RKKRKEKRLK…GAYSKSYTLV (441 aa). Disordered stretches follow at residues 1716–1741, 1773–1803, 1840–1862, and 1974–2053; these read LIDM…HSTR, HGVT…STES, SSDQ…STPS, and LAMP…YTLV. Residues 1732 to 1741 are compositionally biased toward basic residues; the sequence is KNVKSAHSTR. Polar residues predominate over residues 1773-1789; it reads HGVTVTESDSYSASLSQ. The segment covering 1977–1993 has biased composition (pro residues); the sequence is PAPPAGTAPPAPGPTPS.

Homodimer; mediates homophilic interactions to promote cell adhesion. As to expression, in the retina, expressed in the rod photoreceptors, AII amacrine cells and rod bipolar cells (at protein level).

The protein localises to the cell membrane. It localises to the synapse. Cell adhesion molecule that plays a role in neuronal self-avoidance. Promotes repulsion between specific neuronal processes of either the same cell or the same subtype of cells. Promotes both isoneuronal self-avoidance for creating an orderly neurite arborization in retinal rod bipolar cells and heteroneuronal self-avoidance to maintain mosaic spacing between AII amacrine cells. Adhesion molecule that promotes lamina-specific synaptic connections in the retina: expressed in specific subsets of interneurons and retinal ganglion cells (RGCs) and promotes synaptic connectivity via homophilic interactions. The sequence is that of Cell adhesion molecule DSCAML1 (Dscaml1) from Mus musculus (Mouse).